The primary structure comprises 421 residues: Gamma-glutamyl phosphate reductase (421 aa).

This sequence belongs to the gamma-glutamyl phosphate reductase family.

It is found in the cytoplasm. The catalysed reaction is L-glutamate 5-semialdehyde + phosphate + NADP(+) = L-glutamyl 5-phosphate + NADPH + H(+). The protein operates within amino-acid biosynthesis; L-proline biosynthesis; L-glutamate 5-semialdehyde from L-glutamate: step 2/2. In terms of biological role, catalyzes the NADPH-dependent reduction of L-glutamate 5-phosphate into L-glutamate 5-semialdehyde and phosphate. The product spontaneously undergoes cyclization to form 1-pyrroline-5-carboxylate. In Azotobacter vinelandii (strain DJ / ATCC BAA-1303), this protein is Gamma-glutamyl phosphate reductase.